The chain runs to 162 residues: Ribonuclease P protein component (162 aa).

The interval 1 to 62 (MDEKDLATQP…GPPKAGGRLL (62 aa)) is disordered. Basic and acidic residues predominate over residues 21–36 (GPHEDPRRQERAEAQA).

Belongs to the RnpA family. As to quaternary structure, consists of a catalytic RNA component (M1 or rnpB) and a protein subunit.

It catalyses the reaction Endonucleolytic cleavage of RNA, removing 5'-extranucleotides from tRNA precursor.. RNaseP catalyzes the removal of the 5'-leader sequence from pre-tRNA to produce the mature 5'-terminus. It can also cleave other RNA substrates such as 4.5S RNA. The protein component plays an auxiliary but essential role in vivo by binding to the 5'-leader sequence and broadening the substrate specificity of the ribozyme. The chain is Ribonuclease P protein component from Thermus aquaticus.